Here is a 131-residue protein sequence, read N- to C-terminus: Small ribosomal subunit protein uS8 (131 aa).

Belongs to the universal ribosomal protein uS8 family. As to quaternary structure, part of the 30S ribosomal subunit. Contacts proteins S5 and S12.

Functionally, one of the primary rRNA binding proteins, it binds directly to 16S rRNA central domain where it helps coordinate assembly of the platform of the 30S subunit. The polypeptide is Small ribosomal subunit protein uS8 (Burkholderia multivorans (strain ATCC 17616 / 249)).